A 154-amino-acid chain; its full sequence is Cytochrome c-550 (154 aa).

A signal peptide spans 1–20 (MKISIYATLAALSLALPAVA). Gln-21 bears the Pyrrolidone carboxylic acid mark. Heme c contacts are provided by Cys-35, Cys-38, His-39, and Met-120. A propeptide spanning residues 150–154 (EGAAN) is cleaved from the precursor.

Binds 1 heme c group covalently per subunit.

The sequence is that of Cytochrome c-550 (cyc) from Paracoccus versutus (Thiobacillus versutus).